We begin with the raw amino-acid sequence, 83 residues long: uncharacterized protein (83 aa).

This is an uncharacterized protein from Bacillus subtilis (strain 168).